We begin with the raw amino-acid sequence, 379 residues long: Putative clathrin assembly protein At1g68110 (379 aa).

Positions 26–158 constitute an ENTH domain; sequence NSSYRNADLE…SFLSDQIHRL (133 aa).

The protein resides in the membrane. The protein localises to the clathrin-coated pit. It is found in the golgi apparatus. It localises to the cytoplasmic vesicle. Its subcellular location is the clathrin-coated vesicle. In Arabidopsis thaliana (Mouse-ear cress), this protein is Putative clathrin assembly protein At1g68110.